Reading from the N-terminus, the 436-residue chain is UPF0597 protein YhaM (436 aa).

It belongs to the UPF0597 family.

This Escherichia coli (strain SE11) protein is UPF0597 protein YhaM.